A 391-amino-acid polypeptide reads, in one-letter code: Elongation factor Tu (391 aa).

One can recognise a tr-type G domain in the interval 10–201 (KPHVNIGTVG…AVDEYIPTPE (192 aa)). Positions 19–26 (GHVDHGKT) are G1. GTP is bound at residue 19-26 (GHVDHGKT). Threonine 26 is a Mg(2+) binding site. A G2 region spans residues 55–59 (GITIS). Residues 76–79 (DCPG) are G3. Residues 76–80 (DCPGH) and 131–134 (NKVD) contribute to the GTP site. Residues 131 to 134 (NKVD) form a G4 region. The interval 169–171 (SAL) is G5.

The protein belongs to the TRAFAC class translation factor GTPase superfamily. Classic translation factor GTPase family. EF-Tu/EF-1A subfamily. In terms of assembly, monomer.

The protein resides in the cytoplasm. The catalysed reaction is GTP + H2O = GDP + phosphate + H(+). In terms of biological role, GTP hydrolase that promotes the GTP-dependent binding of aminoacyl-tRNA to the A-site of ribosomes during protein biosynthesis. This Ruegeria sp. (strain TM1040) (Silicibacter sp.) protein is Elongation factor Tu.